The following is a 200-amino-acid chain: AP-5 complex subunit sigma-1 (200 aa).

In terms of assembly, probably part of the adaptor protein complex 5 (AP-5) a tetramer composed of AP5B1, AP5M1, AP5S1 and AP5Z1. Interacts with ZFYVE26 and SPG11.

The protein resides in the cytoplasm. The protein localises to the cytosol. It is found in the late endosome membrane. Its subcellular location is the lysosome membrane. In terms of biological role, as part of AP-5, a probable fifth adaptor protein complex it may be involved in endosomal transport. According to PubMed:20613862, it is required for efficient homologous recombination DNA double-strand break repair. In Homo sapiens (Human), this protein is AP-5 complex subunit sigma-1 (AP5S1).